The following is a 148-amino-acid chain: Aspartate carbamoyltransferase regulatory chain (148 aa).

4 residues coordinate Zn(2+): C106, C111, C134, and C137.

It belongs to the PyrI family. In terms of assembly, contains catalytic and regulatory chains. Zn(2+) serves as cofactor.

Involved in allosteric regulation of aspartate carbamoyltransferase. The protein is Aspartate carbamoyltransferase regulatory chain of Methanococcus vannielii (strain ATCC 35089 / DSM 1224 / JCM 13029 / OCM 148 / SB).